The following is a 146-amino-acid chain: Large ribosomal subunit protein uL15 (146 aa).

The interval 1–45 is disordered; the sequence is MTIKLHHLRPAPGSKTERTRVGRGEGSKGKTAGRGTKGTKARKNV. Residues 15-28 are compositionally biased toward basic and acidic residues; the sequence is KTERTRVGRGEGSK.

The protein belongs to the universal ribosomal protein uL15 family. Part of the 50S ribosomal subunit.

Binds to the 23S rRNA. In Mycobacteroides abscessus (strain ATCC 19977 / DSM 44196 / CCUG 20993 / CIP 104536 / JCM 13569 / NCTC 13031 / TMC 1543 / L948) (Mycobacterium abscessus), this protein is Large ribosomal subunit protein uL15.